The chain runs to 376 residues: Biotin synthase (376 aa).

In terms of domain architecture, Radical SAM core spans N68 to S292. 3 residues coordinate [4Fe-4S] cluster: C83, C87, and C90. [2Fe-2S] cluster contacts are provided by C129, C160, C220, and R296.

It belongs to the radical SAM superfamily. Biotin synthase family. In terms of assembly, homodimer. [4Fe-4S] cluster serves as cofactor. [2Fe-2S] cluster is required as a cofactor.

The catalysed reaction is (4R,5S)-dethiobiotin + (sulfur carrier)-SH + 2 reduced [2Fe-2S]-[ferredoxin] + 2 S-adenosyl-L-methionine = (sulfur carrier)-H + biotin + 2 5'-deoxyadenosine + 2 L-methionine + 2 oxidized [2Fe-2S]-[ferredoxin]. Its pathway is cofactor biosynthesis; biotin biosynthesis; biotin from 7,8-diaminononanoate: step 2/2. Its function is as follows. Catalyzes the conversion of dethiobiotin (DTB) to biotin by the insertion of a sulfur atom into dethiobiotin via a radical-based mechanism. The polypeptide is Biotin synthase (Psychrobacter cryohalolentis (strain ATCC BAA-1226 / DSM 17306 / VKM B-2378 / K5)).